Consider the following 207-residue polypeptide: Ribosome maturation factor RimM (207 aa).

In terms of domain architecture, PRC barrel spans 130–207 (EDEFYWVDLI…RIVVDWGLDY (78 aa)).

It belongs to the RimM family. In terms of assembly, binds ribosomal protein uS19.

The protein resides in the cytoplasm. An accessory protein needed during the final step in the assembly of 30S ribosomal subunit, possibly for assembly of the head region. Essential for efficient processing of 16S rRNA. May be needed both before and after RbfA during the maturation of 16S rRNA. It has affinity for free ribosomal 30S subunits but not for 70S ribosomes. This Cupriavidus taiwanensis (strain DSM 17343 / BCRC 17206 / CCUG 44338 / CIP 107171 / LMG 19424 / R1) (Ralstonia taiwanensis (strain LMG 19424)) protein is Ribosome maturation factor RimM.